A 206-amino-acid polypeptide reads, in one-letter code: Large ribosomal subunit protein uL4 (206 aa).

Positions 63-96 (MYKQKGTGRARHHSARAPQFRGGGKAHGPVVRSH) are disordered. The segment covering 64 to 77 (YKQKGTGRARHHSA) has biased composition (basic residues).

The protein belongs to the universal ribosomal protein uL4 family. As to quaternary structure, part of the 50S ribosomal subunit.

Functionally, one of the primary rRNA binding proteins, this protein initially binds near the 5'-end of the 23S rRNA. It is important during the early stages of 50S assembly. It makes multiple contacts with different domains of the 23S rRNA in the assembled 50S subunit and ribosome. Its function is as follows. Forms part of the polypeptide exit tunnel. The protein is Large ribosomal subunit protein uL4 of Allorhizobium ampelinum (strain ATCC BAA-846 / DSM 112012 / S4) (Agrobacterium vitis (strain S4)).